The primary structure comprises 468 residues: Ribosomal protein uS12 methylthiotransferase RimO (468 aa).

Positions Asn16 to Ser130 constitute an MTTase N-terminal domain. Residues Cys25, Cys61, Cys93, Cys164, Cys168, and Cys171 each coordinate [4Fe-4S] cluster. In terms of domain architecture, Radical SAM core spans Ser150 to Lys382. Positions Gln385 to Lys455 constitute a TRAM domain.

Belongs to the methylthiotransferase family. RimO subfamily. [4Fe-4S] cluster is required as a cofactor.

Its subcellular location is the cytoplasm. It catalyses the reaction L-aspartate(89)-[ribosomal protein uS12]-hydrogen + (sulfur carrier)-SH + AH2 + 2 S-adenosyl-L-methionine = 3-methylsulfanyl-L-aspartate(89)-[ribosomal protein uS12]-hydrogen + (sulfur carrier)-H + 5'-deoxyadenosine + L-methionine + A + S-adenosyl-L-homocysteine + 2 H(+). In terms of biological role, catalyzes the methylthiolation of an aspartic acid residue of ribosomal protein uS12. This Chlamydia pneumoniae (Chlamydophila pneumoniae) protein is Ribosomal protein uS12 methylthiotransferase RimO.